Consider the following 261-residue polypeptide: uncharacterized protein (261 aa).

The first 22 residues, 1-22 (MGYSKRFALYISVMILIFAIAG), serve as a signal peptide directing secretion. A lipid anchor (N-palmitoyl cysteine) is attached at Cys-23. A lipid anchor (S-diacylglycerol cysteine) is attached at Cys-23.

It belongs to the staphylococcal tandem lipoprotein family.

The protein resides in the cell membrane. This is an uncharacterized protein from Staphylococcus aureus (strain N315).